We begin with the raw amino-acid sequence, 226 residues long: Thioredoxin domain-containing protein 9 (226 aa).

Residues 74–180 enclose the Thioredoxin domain; sequence REIPSERDFF…TTETLEWRLG (107 aa). A phosphoserine mark is found at Ser-188, Ser-221, and Ser-223.

As to quaternary structure, forms ternary complexes with the chaperonin TCP1 complex, spanning the cylindrical chaperonin cavity and contacting at least 2 subunits.

It localises to the cytoplasm. The protein localises to the nucleus. Its subcellular location is the cytoskeleton. It is found in the microtubule organizing center. The protein resides in the centrosome. It localises to the midbody. Significantly diminishes the chaperonin TCP1 complex ATPase activity, thus negatively impacts protein folding, including that of actin or tubulin. This chain is Thioredoxin domain-containing protein 9 (TXNDC9), found in Homo sapiens (Human).